Here is a 428-residue protein sequence, read N- to C-terminus: C4-dicarboxylate transport protein (428 aa).

A run of 8 helical transmembrane segments spans residues 8-28 (VLYV…HLYP), 44-64 (LIKM…IAGM), 78-98 (LLYF…ATHI), 148-168 (GEIL…AHLG), 184-204 (VLFG…FGAM), 222-242 (LIGT…GAIA), 307-327 (IYMT…LTWM), and 355-375 (AATL…ILGI).

Belongs to the dicarboxylate/amino acid:cation symporter (DAACS) (TC 2.A.23) family.

The protein resides in the cell inner membrane. In terms of biological role, responsible for the transport of dicarboxylates such as succinate, fumarate, and malate from the periplasm across the membrane. This chain is C4-dicarboxylate transport protein, found in Burkholderia thailandensis (strain ATCC 700388 / DSM 13276 / CCUG 48851 / CIP 106301 / E264).